Consider the following 158-residue polypeptide: uncharacterized protein (158 aa).

The HTH asnC-type domain occupies Leu-12–Glu-73. The H-T-H motif DNA-binding region spans Tyr-31–Asn-50.

This is an uncharacterized protein from Pyrococcus abyssi (strain GE5 / Orsay).